We begin with the raw amino-acid sequence, 603 residues long: MNHFPKLLSSQIGFDVAQTILENFDRHYRIFREAAVEAKDLFERSDWHGLQRLARERITSYDDRVRECVELLEDEYDAENIDHDVWPQIKLHYIGLLTSHRQPECAETFFNSVCCKILHRAYFNNDFIFVRPAISTEYIENDEPAAKPTYRAYYPGSEGLAATLERIVTNFQLNPPFEDLERDIACIMQAIHDEFGAFDEAVNFQIHVLSSLFYRNKTAYIVGRIINGDRVLPFAVPIRHARAGVLALDTVLLRRDQLKIIFSFSHSYFLVDMNVPSAYVQFLRSIMPGKPKAEIYTSVGLQKQGKNLFYRDLLHHLSHSSDRFIIAPGIKGLVMLVFTLPSFPYVFKMIKDHFPPPKETTREQIMDKYLLVKRHDRLGRMADTLEYSSVALPLARLDDALVRELEKEVPSLIEYEGDSLVIKHLYIERRMVPLNLYLQNGSDAEIEHGVREYGNAVKELIQANIFPGDMLYKNFGVTRHGRVVFYDYDEIEYLTDCNVRRVPPPRNDEDEMSGEPWYTVGPHDIFPETYAPFLLGDPRVREHFLAHHADFFDPQLWQDSKDRLLRGELPDFFAYEPALRFCLRYPERFAPGDAAEDGKRAAA.

ATP-binding positions include A327–L333 and K348. Residue D383 is part of the active site.

This sequence belongs to the AceK family.

The protein localises to the cytoplasm. It carries out the reaction L-seryl-[isocitrate dehydrogenase] + ATP = O-phospho-L-seryl-[isocitrate dehydrogenase] + ADP + H(+). In terms of biological role, bifunctional enzyme which can phosphorylate or dephosphorylate isocitrate dehydrogenase (IDH) on a specific serine residue. This is a regulatory mechanism which enables bacteria to bypass the Krebs cycle via the glyoxylate shunt in response to the source of carbon. When bacteria are grown on glucose, IDH is fully active and unphosphorylated, but when grown on acetate or ethanol, the activity of IDH declines drastically concomitant with its phosphorylation. This Burkholderia thailandensis (strain ATCC 700388 / DSM 13276 / CCUG 48851 / CIP 106301 / E264) protein is Isocitrate dehydrogenase kinase/phosphatase.